The following is a 276-amino-acid chain: NH(3)-dependent NAD(+) synthetase (276 aa).

Residue 43–50 (GISGGVDS) participates in ATP binding. A Mg(2+)-binding site is contributed by aspartate 49. Deamido-NAD(+) is bound at residue arginine 146. Threonine 166 serves as a coordination point for ATP. Glutamate 171 provides a ligand contact to Mg(2+). Residues lysine 179 and aspartate 186 each coordinate deamido-NAD(+). The ATP site is built by lysine 195 and threonine 217. 266–267 (HK) contributes to the deamido-NAD(+) binding site.

It belongs to the NAD synthetase family. Homodimer.

It catalyses the reaction deamido-NAD(+) + NH4(+) + ATP = AMP + diphosphate + NAD(+) + H(+). It participates in cofactor biosynthesis; NAD(+) biosynthesis; NAD(+) from deamido-NAD(+) (ammonia route): step 1/1. Functionally, catalyzes the ATP-dependent amidation of deamido-NAD to form NAD. Uses ammonia as a nitrogen source. This Vibrio parahaemolyticus serotype O3:K6 (strain RIMD 2210633) protein is NH(3)-dependent NAD(+) synthetase.